Consider the following 216-residue polypeptide: Invasion protein InvF (216 aa).

Positions 112–210 constitute an HTH araC/xylS-type domain; that stretch reads YWLVGYLLAQ…GVSPRKLSNI (99 aa). DNA-binding regions (H-T-H motif) lie at residues 129–150 and 177–200; these read RMLG…SRAL and ITQL…KELI.

Functionally, transcriptional regulator required for the expression of several genes encoding type III secretion system SPI1 effector proteins. The interaction with SicA is necessary for the activation of sigDE (sopB pipC), sicAsipBCDA, and sopE. The sequence is that of Invasion protein InvF (invF) from Salmonella typhi.